The primary structure comprises 293 residues: Xyloglucan endotransglucosylase/hydrolase protein 31 (293 aa).

The N-terminal stretch at 1-20 (MALSLIFLALLVLCPSSGHS) is a signal peptide. A GH16 domain is found at 29-230 (YPSSRVPTSP…YRYQPFVAKY (202 aa)). The active-site Nucleophile is the Glu114. Residue Glu118 is the Proton donor of the active site. Residues Glu118, 131 to 133 (QTN), 141 to 148 (DRNVIGRE), and 209 to 210 (DW) each bind xyloglucan. Intrachain disulfides connect Cys238/Cys246 and Cys280/Cys293. Arg285 serves as a coordination point for xyloglucan.

This sequence belongs to the glycosyl hydrolase 16 family. XTH group 3 subfamily. Interacts with XTH17. The formation of an XTH17-XTH31 dimer may be required for XET activity. Post-translationally, contains at least one intrachain disulfide bond essential for its enzymatic activity. As to expression, predominantly expressed in root. Weakly expressed in influorescence stems. Expressed in root tips and elongation zones, stems, young leaves, flowers and siliques. Expressed in root, hypocotyl, and etiolated whole seedlings.

It localises to the secreted. Its subcellular location is the cell wall. The protein resides in the extracellular space. The protein localises to the apoplast. It is found in the cell membrane. The enzyme catalyses breaks a beta-(1-&gt;4) bond in the backbone of a xyloglucan and transfers the xyloglucanyl segment on to O-4 of the non-reducing terminal glucose residue of an acceptor, which can be a xyloglucan or an oligosaccharide of xyloglucan.. It catalyses the reaction xyloglucan + H2O = xyloglucan oligosaccharides.. Catalyzes xyloglucan endohydrolysis (XEH) and/or endotransglycosylation (XET). Cleaves and religates xyloglucan polymers, an essential constituent of the primary cell wall, and thereby participates in cell wall construction of growing tissues. Involved in the accumulation of hemicelluloses. Has a high XEH activity and only a slight XET activity in vitro, but the main in planta activity seems to be XET, thus controlling aluminum sensitivity. Acceptor preferences are XXXGol = XXFGol &gt; XXLGol &gt; XLLGol = XLFGol. This is Xyloglucan endotransglucosylase/hydrolase protein 31 from Arabidopsis thaliana (Mouse-ear cress).